A 183-amino-acid chain; its full sequence is ATP-dependent protease subunit HslV (183 aa).

T12 is an active-site residue. Residues A166, C169, and T172 each contribute to the Na(+) site.

The protein belongs to the peptidase T1B family. HslV subfamily. As to quaternary structure, a double ring-shaped homohexamer of HslV is capped on each side by a ring-shaped HslU homohexamer. The assembly of the HslU/HslV complex is dependent on binding of ATP.

The protein resides in the cytoplasm. It catalyses the reaction ATP-dependent cleavage of peptide bonds with broad specificity.. With respect to regulation, allosterically activated by HslU binding. In terms of biological role, protease subunit of a proteasome-like degradation complex believed to be a general protein degrading machinery. The protein is ATP-dependent protease subunit HslV of Afipia carboxidovorans (strain ATCC 49405 / DSM 1227 / KCTC 32145 / OM5) (Oligotropha carboxidovorans).